Reading from the N-terminus, the 562-residue chain is Probable tRNA (uracil-O(2)-)-methyltransferase (562 aa).

A disordered region spans residues 520-546 (VSRRQQTNPKKQEATNRPKQPCWMSLN). Residues 535–562 (NRPKQPCWMSLNHPDGCPLGPESCRYLH) form a C3H1-type zinc finger.

Belongs to the TRM44 family.

The protein localises to the cytoplasm. It carries out the reaction uridine(44) in tRNA(Ser) + S-adenosyl-L-methionine = 2'-O-methyluridine(44) in tRNA(Ser) + S-adenosyl-L-homocysteine + H(+). Probable adenosyl-L-methionine (AdoMet)-dependent tRNA (uracil-O(2)-)-methyltransferase. The polypeptide is Probable tRNA (uracil-O(2)-)-methyltransferase (Caenorhabditis briggsae).